A 180-amino-acid polypeptide reads, in one-letter code: NAD(P)H-quinone oxidoreductase subunit I, chloroplastic (180 aa).

4Fe-4S ferredoxin-type domains are found at residues 55 to 84 and 95 to 124; these read GRIHFEFDKCIACEVCVRVCPIDLPLVDWK and LNYSIDFGVCIFCGNCVEYCPTNCLSMTEE. [4Fe-4S] cluster contacts are provided by cysteine 64, cysteine 67, cysteine 70, cysteine 74, cysteine 104, cysteine 107, cysteine 110, and cysteine 114.

The protein belongs to the complex I 23 kDa subunit family. NDH is composed of at least 16 different subunits, 5 of which are encoded in the nucleus. The cofactor is [4Fe-4S] cluster.

The protein resides in the plastid. It localises to the chloroplast thylakoid membrane. It carries out the reaction a plastoquinone + NADH + (n+1) H(+)(in) = a plastoquinol + NAD(+) + n H(+)(out). It catalyses the reaction a plastoquinone + NADPH + (n+1) H(+)(in) = a plastoquinol + NADP(+) + n H(+)(out). Functionally, NDH shuttles electrons from NAD(P)H:plastoquinone, via FMN and iron-sulfur (Fe-S) centers, to quinones in the photosynthetic chain and possibly in a chloroplast respiratory chain. The immediate electron acceptor for the enzyme in this species is believed to be plastoquinone. Couples the redox reaction to proton translocation, and thus conserves the redox energy in a proton gradient. The polypeptide is NAD(P)H-quinone oxidoreductase subunit I, chloroplastic (Sorghum bicolor (Sorghum)).